Consider the following 515-residue polypeptide: Fatty acyl-CoA reductase 1 (515 aa).

The Cytoplasmic portion of the chain corresponds to 1–465 (MVSIPEYYEG…ARKHLNKLRN (465 aa)). The necessary and sufficient for PEX19-mediated localization into peroxisome membrane stretch occupies residues 451–507 (SGLPAARKHLNKLRNIRYGFNTILVILIWRIFIARSQMARNIWYFVVSLCYKFLSYF). A helical transmembrane segment spans residues 466-483 (IRYGFNTILVILIWRIFI). The Peroxisomal segment spans residues 484 to 515 (ARSQMARNIWYFVVSLCYKFLSYFRASSTMRY).

Belongs to the fatty acyl-CoA reductase family. Interacts with PEX19; PEX19 mediates the targeting of FAR1 to peroxisomes.

Its subcellular location is the peroxisome membrane. The catalysed reaction is a long-chain fatty acyl-CoA + 2 NADPH + 2 H(+) = a long-chain primary fatty alcohol + 2 NADP(+) + CoA. It catalyses the reaction hexadecanoyl-CoA + 2 NADPH + 2 H(+) = hexadecan-1-ol + 2 NADP(+) + CoA. The enzyme catalyses octadecanoyl-CoA + 2 NADPH + 2 H(+) = octadecan-1-ol + 2 NADP(+) + CoA. It carries out the reaction (9Z)-octadecenoyl-CoA + 2 NADPH + 2 H(+) = (9Z)-octadecen-1-ol + 2 NADP(+) + CoA. The catalysed reaction is (9Z,12Z)-octadecadienoyl-CoA + 2 NADPH + 2 H(+) = (9Z,12Z)-octadecadien-1-ol + 2 NADP(+) + CoA. It catalyses the reaction eicosanoyl-CoA + 2 NADPH + 2 H(+) = eicosan-1-ol + 2 NADP(+) + CoA. The enzyme catalyses 16-methylheptadecanoyl-CoA + 2 NADPH + 2 H(+) = 16-methylheptadecan-1-ol + 2 NADP(+) + CoA. It carries out the reaction 18-methylnonadecanoyl-CoA + 2 NADPH + 2 H(+) = 18-methylnonadecan-1-ol + 2 NADP(+) + CoA. Its function is as follows. Catalyzes the reduction of saturated and unsaturated C16 or C18 fatty acyl-CoA to fatty alcohols. It plays an essential role in the production of ether lipids/plasmalogens which synthesis requires fatty alcohols. In parallel, it is also required for wax monoesters production since fatty alcohols also constitute a substrate for their synthesis. Catalyzes the reduction of saturated and unsaturated C16 or C18 fatty acyl-CoA to fatty alcohols. It plays an essential role in the production of ether lipids/plasmalogens which synthesis requires fatty alcohols. In parallel, it is also required for wax monoesters production since fatty alcohols also constitute a substrate for their synthesis. This is Fatty acyl-CoA reductase 1 from Rattus norvegicus (Rat).